The sequence spans 471 residues: 3-isopropylmalate dehydratase large subunit (471 aa).

3 residues coordinate [4Fe-4S] cluster: C351, C414, and C417.

This sequence belongs to the aconitase/IPM isomerase family. LeuC type 1 subfamily. As to quaternary structure, heterodimer of LeuC and LeuD. [4Fe-4S] cluster is required as a cofactor.

The catalysed reaction is (2R,3S)-3-isopropylmalate = (2S)-2-isopropylmalate. It functions in the pathway amino-acid biosynthesis; L-leucine biosynthesis; L-leucine from 3-methyl-2-oxobutanoate: step 2/4. Catalyzes the isomerization between 2-isopropylmalate and 3-isopropylmalate, via the formation of 2-isopropylmaleate. This chain is 3-isopropylmalate dehydratase large subunit, found in Colwellia psychrerythraea (strain 34H / ATCC BAA-681) (Vibrio psychroerythus).